A 537-amino-acid chain; its full sequence is Phosphoenolpyruvate carboxykinase (ATP) (537 aa).

Substrate is bound by residues Arg-61, Tyr-195, and Lys-201. ATP-binding positions include Lys-201, His-220, and 236 to 244; that span reads GLSGTGKTT. 2 residues coordinate Mn(2+): Lys-201 and His-220. Residue Asp-257 coordinates Mn(2+). ATP contacts are provided by Glu-285, Arg-323, and Thr-448. Position 323 (Arg-323) interacts with substrate.

This sequence belongs to the phosphoenolpyruvate carboxykinase (ATP) family. Mn(2+) serves as cofactor.

The protein resides in the cytoplasm. It carries out the reaction oxaloacetate + ATP = phosphoenolpyruvate + ADP + CO2. Its pathway is carbohydrate biosynthesis; gluconeogenesis. Involved in the gluconeogenesis. Catalyzes the conversion of oxaloacetate (OAA) to phosphoenolpyruvate (PEP) through direct phosphoryl transfer between the nucleoside triphosphate and OAA. This chain is Phosphoenolpyruvate carboxykinase (ATP), found in Azorhizobium caulinodans (strain ATCC 43989 / DSM 5975 / JCM 20966 / LMG 6465 / NBRC 14845 / NCIMB 13405 / ORS 571).